A 188-amino-acid polypeptide reads, in one-letter code: Probable nicotinate-nucleotide adenylyltransferase (188 aa).

It belongs to the NadD family.

The enzyme catalyses nicotinate beta-D-ribonucleotide + ATP + H(+) = deamido-NAD(+) + diphosphate. It functions in the pathway cofactor biosynthesis; NAD(+) biosynthesis; deamido-NAD(+) from nicotinate D-ribonucleotide: step 1/1. Functionally, catalyzes the reversible adenylation of nicotinate mononucleotide (NaMN) to nicotinic acid adenine dinucleotide (NaAD). This is Probable nicotinate-nucleotide adenylyltransferase from Sulfurovum sp. (strain NBC37-1).